Consider the following 518-residue polypeptide: Ent-cassadiene hydroxylase (518 aa).

A helical transmembrane segment spans residues 6-26 (LILALGLSVLFVLLSKLVSSA). Cys451 contacts heme.

It belongs to the cytochrome P450 family. The cofactor is heme.

It localises to the membrane. The catalysed reaction is ent-cassa-12,15-diene + 3 reduced [NADPH--hemoprotein reductase] + 3 O2 = ent-3beta-hydroxycassa-12,15-dien-2-one + 3 oxidized [NADPH--hemoprotein reductase] + 4 H2O + 3 H(+). Its function is as follows. Enzyme of the diterpenoid metabolism involved in the biosynthesis of antibacterial oryzalides such as phytocassane. Catalyzes the hydroxylation of ent-cassa-12,15-diene to form ent-3beta-hydroxycassa-12,15-dien-2-one. The sequence is that of Ent-cassadiene hydroxylase (CYP71Z7) from Oryza sativa subsp. japonica (Rice).